The sequence spans 447 residues: Serine/threonine-protein phosphatase 2A 55 kDa regulatory subunit B gamma isoform (447 aa).

WD repeat units lie at residues 22-61 (TEAD…KNAP), 87-128 (EIEE…KRPE), 171-209 (GHTY…RSFN), 220-260 (DLTE…LCDK), 279-317 (EIIS…RPIE), 334-375 (ESDC…DVTL), and 410-446 (DFTK…NSDM).

It belongs to the phosphatase 2A regulatory subunit B family. PP2A consists of a common heterodimeric core enzyme, composed of a 36 kDa catalytic subunit (subunit C) and a 65 kDa constant regulatory subunit (PR65 or subunit A), that associates with a variety of regulatory subunits. Proteins that associate with the core dimer include three families of regulatory subunits B (the R2/B/PR55/B55, R3/B''/PR72/PR130/PR59 and R5/B'/B56 families), the 48 kDa variable regulatory subunit, viral proteins, and cell signaling molecules. Interacts with IER5.

Functionally, the B regulatory subunit might modulate substrate selectivity and catalytic activity, and might also direct the localization of the catalytic enzyme to a particular subcellular compartment. The protein is Serine/threonine-protein phosphatase 2A 55 kDa regulatory subunit B gamma isoform (Ppp2r2c) of Mus musculus (Mouse).